The sequence spans 189 residues: Peptidyl-tRNA hydrolase (189 aa).

His-19 acts as the Proton acceptor in catalysis. Residues Tyr-64, Asn-66, and Asn-112 each coordinate tRNA.

It belongs to the PTH family. In terms of assembly, monomer.

The protein resides in the cytoplasm. It catalyses the reaction an N-acyl-L-alpha-aminoacyl-tRNA + H2O = an N-acyl-L-amino acid + a tRNA + H(+). Hydrolyzes ribosome-free peptidyl-tRNAs (with 1 or more amino acids incorporated), which drop off the ribosome during protein synthesis, or as a result of ribosome stalling. Its function is as follows. Catalyzes the release of premature peptidyl moieties from peptidyl-tRNA molecules trapped in stalled 50S ribosomal subunits, and thus maintains levels of free tRNAs and 50S ribosomes. The polypeptide is Peptidyl-tRNA hydrolase (Gluconobacter oxydans (strain 621H) (Gluconobacter suboxydans)).